Consider the following 218-residue polypeptide: Thiopurine S-methyltransferase (218 aa).

Residues tryptophan 10, leucine 45, glutamate 66, and arginine 123 each coordinate S-adenosyl-L-methionine.

Belongs to the class I-like SAM-binding methyltransferase superfamily. TPMT family.

Its subcellular location is the cytoplasm. The enzyme catalyses S-adenosyl-L-methionine + a thiopurine = S-adenosyl-L-homocysteine + a thiopurine S-methylether.. The chain is Thiopurine S-methyltransferase from Shewanella loihica (strain ATCC BAA-1088 / PV-4).